Consider the following 239-residue polypeptide: Regulator of G-protein signaling 20 (239 aa).

Residues 1 to 29 (MRTANGGPRARASPSASPADPGLPEGSER) form a disordered region. Residues 8–19 (PRARASPSASPA) are compositionally biased toward low complexity. Residues 113-229 (SFDNLMVTPA…MNSTVYKDLL (117 aa)) form the RGS domain.

As to quaternary structure, forms a complex with G(alpha)z/i2 subunits and mu-opioid receptors; the formation of this complex results in mu-opioid receptor desensitization. Interacts with OPRM1. Fatty acylated. Heavily palmitoylated in the cysteine string motif. In terms of processing, N- and O-glycosylated in synapsomal membranes. Post-translationally, serine phosphorylated in synapsomal membranes. Sumoylated with SUMO1, SUMO2 and SUMO3. Sumoylation increases binding to the G-proteins, G(alpha)-i2 and G(z), and interaction with mu-opioid receptors.

It localises to the membrane. The protein localises to the nucleus. The protein resides in the cytoplasm. Its function is as follows. Inhibits signal transduction by increasing the GTPase activity of G protein alpha subunits thereby driving them into their inactive GDP-bound form. Binds selectively to G(z)-alpha and G(alpha)-i2 subunits, accelerates their GTPase activity and regulates their signaling activities. The G(z)-alpha activity is inhibited by the phosphorylation and palmitoylation of the G-protein. Negatively regulates mu-opioid receptor-mediated activation of the G-proteins. The protein is Regulator of G-protein signaling 20 (Rgs20) of Mus musculus (Mouse).